A 146-amino-acid polypeptide reads, in one-letter code: Hut operon positive regulatory protein (146 aa).

It belongs to the HutP family. As to quaternary structure, homohexamer.

Its function is as follows. Antiterminator that binds to cis-acting regulatory sequences on the mRNA in the presence of histidine, thereby suppressing transcription termination and activating the hut operon for histidine utilization. The polypeptide is Hut operon positive regulatory protein (Bacillus cereus (strain ZK / E33L)).